The chain runs to 873 residues: DNA helicase/primase complex-associated protein (873 aa).

The interval 394–422 is disordered; the sequence is PPLPRDDGDGENNVVEVSSSTGGAHPPSD.

This sequence belongs to the herpesviridae HEPA family. Associates with the primase and the helicase to form the helicase-primase complex. Interacts with the origin-binding protein. Interacts with the polymerase catalytic subunit.

The protein resides in the host nucleus. In terms of biological role, component of the helicase/primase complex. Unwinds the DNA at the replication forks and generates single-stranded DNA for both leading and lagging strand synthesis. The primase synthesizes short RNA primers on the lagging strand that the polymerase presumably elongates using dNTPs. The primase-associated factor has no known catalytic activity in the complex and may serve to facilitate the formation of the replisome by directly interacting with the origin-binding protein and the polymerase. The polypeptide is DNA helicase/primase complex-associated protein (UL102) (Homo sapiens (Human)).